The primary structure comprises 142 residues: UPF0179 protein PYRAB06360 (142 aa).

It belongs to the UPF0179 family.

This is UPF0179 protein PYRAB06360 from Pyrococcus abyssi (strain GE5 / Orsay).